The sequence spans 341 residues: Mitochondrial protein C2orf69 homolog (341 aa).

The N-terminal 35 residues, Met1–Ala35, are a transit peptide targeting the mitochondrion.

This sequence belongs to the C2orf69 family.

It localises to the mitochondrion matrix. Its function is as follows. May play a role in the respiratory chain. The chain is Mitochondrial protein C2orf69 homolog from Danio rerio (Zebrafish).